The chain runs to 607 residues: UvrABC system protein C (607 aa).

The region spanning 15 to 92 (SQPGSYQMKD…IKRYRPYFNI (78 aa)) is the GIY-YIG domain. In terms of domain architecture, UVR spans 197–232 (GKAISDIKKKMKRASDSTEYELAADFRDRLKFIDQT).

Belongs to the UvrC family. Interacts with UvrB in an incision complex.

It is found in the cytoplasm. Its function is as follows. The UvrABC repair system catalyzes the recognition and processing of DNA lesions. UvrC both incises the 5' and 3' sides of the lesion. The N-terminal half is responsible for the 3' incision and the C-terminal half is responsible for the 5' incision. This is UvrABC system protein C from Oenococcus oeni (strain ATCC BAA-331 / PSU-1).